Here is a 2150-residue protein sequence, read N- to C-terminus: A disintegrin and metalloproteinase with thrombospondin motifs gon-1 (2150 aa).

The signal sequence occupies residues 1-28 (MRSIGGSFHLLQPVVAALILLVVCLVYA). The propeptide occupies 29 to 273 (LQSGSGTISE…VIERKARSRR (245 aa)). Asn-134, Asn-213, Asn-243, and Asn-248 each carry an N-linked (GlcNAc...) asparagine glycan. In terms of domain architecture, Peptidase M12B spans 280–493 (HYVEVLVVAD…GQTQCLFDQP (214 aa)). 2 cysteine pairs are disulfide-bonded: Cys-402–Cys-488 and Cys-440–Cys-470. Zn(2+) is bound at residue His-424. Glu-425 is a catalytic residue. Zn(2+) is bound by residues His-428 and His-434. Residues 503–587 (FVRDEPGKKY…RLAPESLTKI (85 aa)) enclose the Disintegrin domain. The TSP type-1 1 domain maps to 588–643 (DGQWGDWRSWGECSRTCGGGVQKGLRDCDSPKPRNGGKYCVGQRERYRSCNTQECP). Intrachain disulfides connect Cys-600/Cys-637, Cys-604/Cys-642, and Cys-615/Cys-627. Asn-842 carries N-linked (GlcNAc...) asparagine glycosylation. TSP type-1 domains are found at residues 943–1003 (CSTR…IDCS), 1004–1057 (GRKW…RECN), 1060–1115 (PCPR…HACT), 1116–1165 (WWQF…KPCH), 1168–1227 (SCPK…GTCP), 1228–1277 (FWRN…QTCH), 1280–1339 (PCTS…DTCD), 1352–1409 (PPIR…RDCS), 1410–1469 (YWKM…EPCP), 1474–1524 (HIGS…ELCP), and 1527–1585 (TNNS…PPCR). Residues Asn-1139 and Asn-1199 are each glycosylated (N-linked (GlcNAc...) asparagine). N-linked (GlcNAc...) asparagine glycans are attached at residues Asn-1370 and Asn-1432. N-linked (GlcNAc...) asparagine glycosylation is found at Asn-1528, Asn-1590, Asn-1606, and Asn-1654. The interval 1590 to 1614 (NKTSSASMTSLSSSNSNTTSSASAS) is disordered. Low complexity predominate over residues 1592–1614 (TSSASMTSLSSSNSNTTSSASAS). 5 TSP type-1 domains span residues 1621–1675 (PVVS…VRCR), 1678–1736 (HCPR…VACP), 1737–1793 (AYRW…DTSN), 1794–1866 (CPYE…NPCD), and 1867–1924 (SEFK…RNCL). 6 disulfide bridges follow: Cys-1679–Cys-1718, Cys-1690–Cys-1694, Cys-1690–Cys-1730, Cys-1694–Cys-1735, Cys-1705–Cys-1718, and Cys-1730–Cys-1735. 2 N-linked (GlcNAc...) asparagine glycosylation sites follow: Asn-1828 and Asn-1855. The GON domain maps to 1924-2123 (LPSTCQELKS…RYKGLIFEVN (200 aa)). Residues Asn-1942, Asn-1960, and Asn-1997 are each glycosylated (N-linked (GlcNAc...) asparagine).

Zn(2+) is required as a cofactor. As to expression, expressed by the gonadal distal tip cells (DTCs). Expressed in muscles, including body wall, vulval and anal depressor muscles. Expressed in motor neurons and in ASI and ASJ neurons.

It localises to the secreted. The protein localises to the extracellular space. It is found in the extracellular matrix. The protein resides in the basement membrane. Its subcellular location is the endoplasmic reticulum. It localises to the golgi apparatus. Functionally, secreted metalloprotease required for distal tip cell (DTC) migration along the body wall basement membranes, a key step that promotes gonad morphogenesis. Probably acts by remodeling the basement membrane during cell migration. Required to restrict presynaptic growth at the neuromuscular junctions (NMJ) in late larval stage and in adult motor neurons, probably by controlling collagen IV emb-9 degradation, a component of the synapse basement membrane. Also involved in the organization of adult muscle morphology. Has a protease-independent function in promoting the transport from the endoplasmic reticulum to the Golgi apparatus of a variety of secretory cargos. Required for the secretion of insulin-like peptide ins-7, daf-28 and ins-18 and TGF beta-like protein daf-7. In peripheral tissues, negatively regulates insulin-mediated daf-16 translocation and thereby negatively regulates lifespan and dauer formation. The polypeptide is A disintegrin and metalloproteinase with thrombospondin motifs gon-1 (Caenorhabditis elegans).